Reading from the N-terminus, the 777-residue chain is Glucocorticoid receptor (777 aa).

Residues 1 to 14 show a composition bias toward basic and acidic residues; sequence MDSKESLTPGKEEN. The segment at 1–22 is disordered; that stretch reads MDSKESLTPGKEENPSSVLTQE. A modulating region spans residues 1 to 420; it reads MDSKESLTPG…TATTGPPPKL (420 aa). A Phosphothreonine modification is found at Thr8. An Omega-N-methylarginine modification is found at Arg23. Phosphoserine is present on residues Ser45, Ser113, Ser134, and Ser141. A disordered region spans residues 130–182; sequence NRSTSVPENPKSSASSSVSAAPKEKEFPKTHSDVSSEQQNLKGQTGSNGGNVK. Positions 134-150 are enriched in low complexity; the sequence is SVPENPKSSASSSVSAA. Residues 151–163 are compositionally biased toward basic and acidic residues; sequence PKEKEFPKTHSDV. The span at 164–174 shows a compositional bias: polar residues; that stretch reads SSEQQNLKGQT. Phosphoserine occurs at positions 203, 211, and 226. Residue Lys258 forms a Glycyl lysine isopeptide (Lys-Gly) (interchain with G-Cter in SUMO2) linkage. Position 267 is a phosphoserine (Ser267). Residues Lys277 and Lys293 each participate in a glycyl lysine isopeptide (Lys-Gly) (interchain with G-Cter in SUMO); alternate cross-link. Glycyl lysine isopeptide (Lys-Gly) (interchain with G-Cter in SUMO2); alternate cross-links involve residues Lys277 and Lys293. A compositionally biased stretch (low complexity) spans 394–414; sequence SSPSMRPDVSSPPSSSSTATT. The interval 394-415 is disordered; sequence SSPSMRPDVSSPPSSSSTATTG. Ser404 carries the phosphoserine modification. Lys419 participates in a covalent cross-link: Glycyl lysine isopeptide (Lys-Gly) (interchain with G-Cter in ubiquitin). 2 consecutive NR C4-type zinc fingers follow at residues 421 to 441 and 457 to 481; these read CLVC…CGSC and CAGR…YRKC. The segment at residues 421–486 is a DNA-binding region (nuclear receptor); sequence CLVCSDEASG…RYRKCLQAGM (66 aa). Residues Lys480, Lys492, Lys494, and Lys495 each carry the N6-acetyllysine modification. Residues 485-777 are interaction with CLOCK; the sequence is GMNLEARKTK…NIKKLLFHQK (293 aa). Positions 487-523 are hinge; the sequence is NLEARKTKKKIKGIQQATTGVSQETSENPANKTIVPA. The NR LBD domain occupies 524–758; the sequence is TLPQLTPTLV…FPEMLAEIIT (235 aa). Residues 532–697 form an interaction with CRY1 region; that stretch reads LVSLLEVIEP…EIRMTYIKEL (166 aa). A Glycyl lysine isopeptide (Lys-Gly) (interchain with G-Cter in SUMO) cross-link involves residue Lys703.

Belongs to the nuclear hormone receptor family. NR3 subfamily. Heteromultimeric cytoplasmic complex with HSP90AA1, HSPA1A/HSPA1B, and FKBP5 or another immunophilin such as PPID, STIP1, or the immunophilin homolog PPP5C. Upon ligand binding FKBP5 dissociates from the complex and FKBP4 takes its place, thereby linking the complex to dynein and mediating transport to the nucleus, where the complex dissociates. Probably forms a complex composed of chaperones HSP90 and HSP70, co-chaperones CDC37, PPP5C, TSC1 and client protein TSC2, CDK4, AKT, RAF1 and NR3C1; this complex does not contain co-chaperones STIP1/HOP and PTGES3/p23. Directly interacts with UNC45A. Binds to DNA as a homodimer, and as heterodimer with NR3C2 or the retinoid X receptor. Binds STAT5A and STAT5B homodimers and heterodimers. Interacts with NRIP1, POU2F1, POU2F2 and TRIM28. Interacts with several coactivator complexes, including the SMARCA4 complex, CREBBP/EP300, TADA2L (Ada complex) and p160 coactivators such as NCOA2 and NCOA6. Interaction with BAG1 inhibits transactivation. Interacts with HEXIM1 and TGFB1I1. Interacts with NCOA1. Interacts with NCOA3, SMARCA4, SMARCC1, SMARCD1, and SMARCE1. Interacts with CLOCK, CRY1 and CRY2 in a ligand-dependent fashion. Interacts with CIART. Interacts with RWDD3. Interacts with UBE2I/UBC9 and this interaction is enhanced in the presence of RWDD3. Interacts with GRIP1. Interacts with NR4A3 (via nuclear receptor DNA-binding domain), represses transcription activity of NR4A3 on the POMC promoter Nur response element (NurRE). Directly interacts with PNRC2 to attract and form a complex with UPF1 and DCP1A; the interaction leads to rapid mRNA degradation. Interacts with GSK3B. Interacts with FNIP1 and FNIP2. Interacts (via C-terminus) with HNRNPU (via C-terminus). Interacts with MCM3AP. Interacts (via domain NR LBD) with HSP90AA1 and HSP90AB1. In the absence of hormonal ligand, interacts with TACC1. Interacts (via NR LBD domain) with ZNF764 (via KRAB domain); the interaction regulates transcription factor activity of NR3C1 by directing its actions toward certain biologic pathways. Post-translationally, acetylation by CLOCK reduces its binding to glucocorticoid response elements and its transcriptional activity. In terms of processing, increased proteasome-mediated degradation in response to glucocorticoids. Phosphorylated in the absence of hormone; becomes hyperphosphorylated in the presence of glucocorticoid. The Ser-203, Ser-226 and Ser-404-phosphorylated forms are mainly cytoplasmic, and the Ser-211-phosphorylated form is nuclear. Phosphorylation at Ser-211 increases transcriptional activity. Phosphorylation at Ser-203, Ser-226 and Ser-404 decreases signaling capacity. Phosphorylation at Ser-404 may protect from glucocorticoid-induced apoptosis. Phosphorylation at Ser-203 and Ser-211 is not required in regulation of chromosome segregation. May be dephosphorylated by PPP5C, attenuates NR3C1 action. Post-translationally, ubiquitinated by UBR5, leading to its degradation: UBR5 specifically recognizes and binds ligand-bound NR3C1 when it is not associated with coactivators (NCOAs). In presence of NCOAs, the UBR5-degron is not accessible, preventing its ubiquitination and degradation. In terms of processing, sumoylation at Lys-277 and Lys-293 negatively regulates its transcriptional activity. Sumoylation at Lys-703 positively regulates its transcriptional activity in the presence of RWDD3. Sumoylation at Lys-277 and Lys-293 is dispensable whereas sumoylation at Lys-703 is critical for the stimulatory effect of RWDD3 on its transcriptional activity. Heat shock increases sumoylation in a RWDD3-dependent manner.

It is found in the cytoplasm. The protein resides in the nucleus. Its subcellular location is the mitochondrion. It localises to the cytoskeleton. The protein localises to the spindle. It is found in the microtubule organizing center. The protein resides in the centrosome. Its subcellular location is the chromosome. It localises to the nucleoplasm. In terms of biological role, receptor for glucocorticoids (GC). Has a dual mode of action: as a transcription factor that binds to glucocorticoid response elements (GRE), both for nuclear and mitochondrial DNA, and as a modulator of other transcription factors. Affects inflammatory responses, cellular proliferation and differentiation in target tissues. Involved in chromatin remodeling. Plays a role in rapid mRNA degradation by binding to the 5' UTR of target mRNAs and interacting with PNRC2 in a ligand-dependent manner which recruits the RNA helicase UPF1 and the mRNA-decapping enzyme DCP1A, leading to RNA decay. Could act as a coactivator for STAT5-dependent transcription upon growth hormone (GH) stimulation and could reveal an essential role of hepatic GR in the control of body growth. Mediates glucocorticoid-induced apoptosis. Promotes accurate chromosome segregation during mitosis. May act as a tumor suppressor. May play a negative role in adipogenesis through the regulation of lipolytic and antilipogenic gene expression. The sequence is that of Glucocorticoid receptor (NR3C1) from Saimiri boliviensis boliviensis (Bolivian squirrel monkey).